The chain runs to 116 residues: Large ribosomal subunit protein uL23 (116 aa).

Belongs to the universal ribosomal protein uL23 family. As to quaternary structure, part of the 50S ribosomal subunit. Contacts protein L29, and trigger factor when it is bound to the ribosome.

One of the early assembly proteins it binds 23S rRNA. One of the proteins that surrounds the polypeptide exit tunnel on the outside of the ribosome. Forms the main docking site for trigger factor binding to the ribosome. This is Large ribosomal subunit protein uL23 from Psychrobacter sp. (strain PRwf-1).